A 500-amino-acid polypeptide reads, in one-letter code: L-arabinose isomerase (500 aa).

4 residues coordinate Mn(2+): E306, E333, H350, and H450.

It belongs to the arabinose isomerase family. In terms of assembly, homohexamer. Mn(2+) is required as a cofactor.

The enzyme catalyses beta-L-arabinopyranose = L-ribulose. It functions in the pathway carbohydrate degradation; L-arabinose degradation via L-ribulose; D-xylulose 5-phosphate from L-arabinose (bacterial route): step 1/3. In terms of biological role, catalyzes the conversion of L-arabinose to L-ribulose. The sequence is that of L-arabinose isomerase from Salmonella typhi.